A 454-amino-acid polypeptide reads, in one-letter code: UDP-N-acetylmuramoylalanine--D-glutamate ligase (454 aa).

114–120 contacts ATP; that stretch reads GTNGKTT.

Belongs to the MurCDEF family.

It localises to the cytoplasm. It catalyses the reaction UDP-N-acetyl-alpha-D-muramoyl-L-alanine + D-glutamate + ATP = UDP-N-acetyl-alpha-D-muramoyl-L-alanyl-D-glutamate + ADP + phosphate + H(+). The protein operates within cell wall biogenesis; peptidoglycan biosynthesis. In terms of biological role, cell wall formation. Catalyzes the addition of glutamate to the nucleotide precursor UDP-N-acetylmuramoyl-L-alanine (UMA). The protein is UDP-N-acetylmuramoylalanine--D-glutamate ligase of Desulfitobacterium hafniense (strain Y51).